A 248-amino-acid chain; its full sequence is ATP synthase subunit a (248 aa).

A run of 5 helical transmembrane segments spans residues 31–51 (GQVLIASWIAIALILTVVILG), 90–110 (VPYVGTLFLFIFVSNWMGNLF), 129–149 (INTTAGLALLTSIMYFVAGIS), 195–215 (VIAVLVLLVPLFIPVPVMVLF), and 216–236 (LFTGAIQALIFSTLSAAYIGE).

It belongs to the ATPase A chain family. As to quaternary structure, F-type ATPases have 2 components, CF(1) - the catalytic core - and CF(0) - the membrane proton channel. CF(1) has five subunits: alpha(3), beta(3), gamma(1), delta(1), epsilon(1). CF(0) has four main subunits: a, b, b' and c.

The protein localises to the cellular thylakoid membrane. Its function is as follows. Key component of the proton channel; it plays a direct role in the translocation of protons across the membrane. The protein is ATP synthase subunit a of Synechococcus sp. (strain JA-2-3B'a(2-13)) (Cyanobacteria bacterium Yellowstone B-Prime).